The sequence spans 429 residues: Methylenetetrahydrofolate--tRNA-(uracil-5-)-methyltransferase TrmFO (429 aa).

An FAD-binding site is contributed by 7 to 12; it reads GAGLAG.

It belongs to the MnmG family. TrmFO subfamily. It depends on FAD as a cofactor.

The protein localises to the cytoplasm. It carries out the reaction uridine(54) in tRNA + (6R)-5,10-methylene-5,6,7,8-tetrahydrofolate + NADH + H(+) = 5-methyluridine(54) in tRNA + (6S)-5,6,7,8-tetrahydrofolate + NAD(+). The catalysed reaction is uridine(54) in tRNA + (6R)-5,10-methylene-5,6,7,8-tetrahydrofolate + NADPH + H(+) = 5-methyluridine(54) in tRNA + (6S)-5,6,7,8-tetrahydrofolate + NADP(+). Functionally, catalyzes the folate-dependent formation of 5-methyl-uridine at position 54 (M-5-U54) in all tRNAs. This chain is Methylenetetrahydrofolate--tRNA-(uracil-5-)-methyltransferase TrmFO, found in Thermosipho africanus (strain TCF52B).